The following is a 242-amino-acid chain: Spiralin (242 aa).

Positions 1-23 (MKKLLSILAVFGVSAVGTTSVVA) are cleaved as a signal peptide. Cys-24 carries N-palmitoyl cysteine lipidation. The S-diacylglycerol cysteine moiety is linked to residue Cys-24.

Belongs to the spiralin family. In terms of assembly, seems to occur as dimer, tetramers, and large oligomers of identical chains. In terms of processing, palmitate and stearate are the major lipid components.

It is found in the cell membrane. Major membrane protein of spiroplasma. This chain is Spiralin (spi), found in Spiroplasma melliferum.